A 416-amino-acid chain; its full sequence is Argininosuccinate synthase (416 aa).

ATP is bound by residues 11–19 and Ala37; that span reads AYSGGLDTS. Residue Tyr88 participates in L-citrulline binding. Residues Tyr88 and Tyr114 each carry the phosphotyrosine modification. 116–124 provides a ligand contact to ATP; that stretch reads AHGATGKGN. Thr120, Asn124, and Asp125 together coordinate L-aspartate. Residue Asn124 participates in L-citrulline binding. Residues Arg128, Ser181, Ser190, Glu271, and Tyr283 each contribute to the L-citrulline site. Ser181 carries the post-translational modification Phosphoserine.

This sequence belongs to the argininosuccinate synthase family. Homotetramer.

It is found in the cytoplasm. The protein localises to the cytosol. It catalyses the reaction L-citrulline + L-aspartate + ATP = 2-(N(omega)-L-arginino)succinate + AMP + diphosphate + H(+). The protein operates within amino-acid biosynthesis; L-arginine biosynthesis; L-arginine from L-ornithine and carbamoyl phosphate: step 2/3. Its pathway is nitrogen metabolism; urea cycle; (N(omega)-L-arginino)succinate from L-aspartate and L-citrulline: step 1/1. Functionally, one of the enzymes of the urea cycle, the metabolic pathway transforming neurotoxic amonia produced by protein catabolism into inocuous urea in the liver of ureotelic animals. Catalyzes the formation of arginosuccinate from aspartate, citrulline and ATP and together with ASL it is responsible for the biosynthesis of arginine in most body tissues. This Gallus gallus (Chicken) protein is Argininosuccinate synthase.